The primary structure comprises 584 residues: UBX domain-containing protein 2 (584 aa).

The Cytoplasmic portion of the chain corresponds to 1–80 (MPVVNHEDSE…PTQTSTPMAE (80 aa)). Residues 81–101 (TLVPPALGPRPLLFTASLPVV) form a helical membrane-spanning segment. Residues 102 to 151 (RPLPANFRNDFRTIGLNGRSNTVWSMFESFSYDGNPFLFILLLIPRIINR) lie on the Lumenal side of the membrane. Residues 152–172 (LSATIFTFFCTLLSLHSISGG) form a helical membrane-spanning segment. Residues 173–584 (GNSGKPKISK…DEEDEENEEQ (412 aa)) lie on the Cytoplasmic side of the membrane. In terms of domain architecture, UBX spans 426–570 (ETTGKQATLQ…WPNGSLLVEA (145 aa)).

Component of the DOA10 ubiquitin ligase complex which contains E3 ligase SSM4/DOA10 and CDC48-binding protein UBX2/SEL1. Component of the HRD1 ubiquitin ligase complex which contains the E3 ligase HRD1, its cofactors HRD3, USA1 and DER1, substrate recruiting factor YOS9 and UBX2. In ERAD-L, HRD3 and YOS9 jointly bind misfolded glycoproteins in the endoplasmic reticulum (ER) lumen. Movement of ERAD-L substrates through the ER membrane is facilitated by HRD1 and DER1 which have lateral gates facing each other and which distort the membrane region between the lateral gates, making it much thinner than a normal phospholipid bilayer. Substrates insert into the membrane as a hairpin loop with one strand interacting with DER1 and the other with HRD1. Both the DOA10 and HRD1 ubiquitin ligase complexes interact with the heterotrimeric CDC48-NPL4-UFD1 ATPase complex which is recruited by UBX2 via its interaction with CDC48 and which moves ubiquitinated substrates to the cytosol for targeting to the proteasome.

It localises to the endoplasmic reticulum membrane. Its function is as follows. Integral endoplasmic reticulum membrane protein that coordinates the assembly of the ER-associated protein degradation (ERAD) machinery at the ER membrane. Mediates binding of CDC48 to the E3 ubiquitin ligases SSM4/DOA10 and HRD1, and to ERAD substrates. Component of the DOA10 ubiquitin ligase complex, which is part of the ERAD-C pathway responsible for the rapid degradation of membrane proteins with misfolded cytoplasmic domains. ERAD-C substrates are ubiquitinated through DOA10 in conjunction with the E2 ubiquitin-conjugating enzymes UBC6 and UBC7-CUE1. Also a component of the HRD1 ubiquitin ligase complex, which is part of the ERAD-L and ERAD-M pathways responsible for the rapid degradation of soluble lumenal and membrane proteins with misfolded lumenal domains (ERAD-L), or ER-membrane proteins with misfolded transmembrane domains (ERAD-M). ERAD-L substrates are ubiquitinated through HRD1 in conjunction with the E2 ubiquitin-conjugating enzymes UBC1 and UBC7-CUE1. Ubiquitinated substrates are then removed to the cytosol via the action of the CDC48-NPL4-UFD1 ATPase complex and targeted to the proteasome. This is UBX domain-containing protein 2 (UBX2) from Saccharomyces cerevisiae (strain ATCC 204508 / S288c) (Baker's yeast).